The following is a 793-amino-acid chain: Methionine--tRNA ligase (793 aa).

The 'HIGH' region signature appears at 11-21 (PYVNNFPHLGN). Zn(2+) contacts are provided by Cys142, Cys145, Cys155, and Cys158. A 'KMSKS' region motif is present at residues 334–338 (KFSKS). Lys337 is an ATP binding site. The segment covering 581–590 (SQKDRKKSEK) has biased composition (basic and acidic residues). Residues 581–610 (SQKDRKKSEKGCSACKDSGSSKSDAAASSA) are disordered. Residues 591–610 (GCSACKDSGSSKSDAAASSA) are compositionally biased toward low complexity. Residues 622-727 (FSKKIALKTA…PWAAPGTPVI (106 aa)) form the tRNA-binding domain.

This sequence belongs to the class-I aminoacyl-tRNA synthetase family. MetG type 1 subfamily. In terms of assembly, homodimer. It depends on Zn(2+) as a cofactor.

It localises to the cytoplasm. The catalysed reaction is tRNA(Met) + L-methionine + ATP = L-methionyl-tRNA(Met) + AMP + diphosphate. In terms of biological role, is required not only for elongation of protein synthesis but also for the initiation of all mRNA translation through initiator tRNA(fMet) aminoacylation. This chain is Methionine--tRNA ligase, found in Treponema denticola (strain ATCC 35405 / DSM 14222 / CIP 103919 / JCM 8153 / KCTC 15104).